The chain runs to 133 residues: Large ribosomal subunit protein bL19 (133 aa).

It belongs to the bacterial ribosomal protein bL19 family.

This protein is located at the 30S-50S ribosomal subunit interface and may play a role in the structure and function of the aminoacyl-tRNA binding site. The sequence is that of Large ribosomal subunit protein bL19 from Stenotrophomonas maltophilia (strain R551-3).